A 285-amino-acid chain; its full sequence is NADPH-dependent 7-cyano-7-deazaguanine reductase (285 aa).

Position 91-93 (91-93) interacts with substrate; that stretch reads IES. An NADPH-binding site is contributed by 93–94; sequence SK. Cys-192 acts as the Thioimide intermediate in catalysis. The active-site Proton donor is Asp-199. Position 231-232 (231-232) interacts with substrate; sequence HE. 260 to 261 serves as a coordination point for NADPH; that stretch reads RG.

This sequence belongs to the GTP cyclohydrolase I family. QueF type 2 subfamily. Homodimer.

The protein localises to the cytoplasm. The enzyme catalyses 7-aminomethyl-7-carbaguanine + 2 NADP(+) = 7-cyano-7-deazaguanine + 2 NADPH + 3 H(+). The protein operates within tRNA modification; tRNA-queuosine biosynthesis. Functionally, catalyzes the NADPH-dependent reduction of 7-cyano-7-deazaguanine (preQ0) to 7-aminomethyl-7-deazaguanine (preQ1). The protein is NADPH-dependent 7-cyano-7-deazaguanine reductase of Psychromonas ingrahamii (strain DSM 17664 / CCUG 51855 / 37).